We begin with the raw amino-acid sequence, 117 residues long: Histone-like protein Hq1 (117 aa).

Composition is skewed to basic residues over residues 1 to 17 and 39 to 50; these read MPAK…RSKA and RKLRAAQKKLAK. Positions 1–117 are disordered; that stretch reads MPAKKRKTTR…RGRGRPRKKA (117 aa). Positions 51–68 are enriched in basic and acidic residues; that stretch reads AKKDASRKLAKLRKEAAR. A compositionally biased stretch (basic residues) spans 71–117; it reads AAAKKTRAPSKKGRKKATRKKGGGRSRKTARKVSTMKRGRGRPRKKA.

Functionally, binds DNA in vitro. The chain is Histone-like protein Hq1 (hcbA) from Coxiella burnetii (strain RSA 493 / Nine Mile phase I).